A 155-amino-acid chain; its full sequence is 6,7-dimethyl-8-ribityllumazine synthase (155 aa).

5-amino-6-(D-ribitylamino)uracil-binding positions include phenylalanine 22, 56–58 (AFE), and 80–82 (AVI). 85-86 (AT) lines the (2S)-2-hydroxy-3-oxobutyl phosphate pocket. Catalysis depends on histidine 88, which acts as the Proton donor. Phenylalanine 113 serves as a coordination point for 5-amino-6-(D-ribitylamino)uracil. A (2S)-2-hydroxy-3-oxobutyl phosphate-binding site is contributed by arginine 127.

The protein belongs to the DMRL synthase family.

It catalyses the reaction (2S)-2-hydroxy-3-oxobutyl phosphate + 5-amino-6-(D-ribitylamino)uracil = 6,7-dimethyl-8-(1-D-ribityl)lumazine + phosphate + 2 H2O + H(+). It functions in the pathway cofactor biosynthesis; riboflavin biosynthesis; riboflavin from 2-hydroxy-3-oxobutyl phosphate and 5-amino-6-(D-ribitylamino)uracil: step 1/2. Functionally, catalyzes the formation of 6,7-dimethyl-8-ribityllumazine by condensation of 5-amino-6-(D-ribitylamino)uracil with 3,4-dihydroxy-2-butanone 4-phosphate. This is the penultimate step in the biosynthesis of riboflavin. The chain is 6,7-dimethyl-8-ribityllumazine synthase from Clostridium acetobutylicum (strain ATCC 824 / DSM 792 / JCM 1419 / IAM 19013 / LMG 5710 / NBRC 13948 / NRRL B-527 / VKM B-1787 / 2291 / W).